A 268-amino-acid chain; its full sequence is MLDSTTLVALVLGLLEGLTEFIPVSSTGHLLLAGHFLGFESAGRSFEVVIQLGAVLAVLTVYAAKLVSVIRAAPHDPRAFRFLVAVLVAFLPAVVIGVLAHGFIKAVLFETPILIATMLILGGIVLLFVDRMAPEPRYDDAMDLPLNVALKIGFIQCLAMVPGVSRSGATIVGGLMLGAGKRAAAEFSFFLSMPTMAGAFAFDLFKNRDVLDASALGEIAVGFVAAFVAAVLVVRWLLGYVSRHGYALFGWWRIAVGSVALAALLAGY.

The next 8 helical transmembrane spans lie at 4-24 (STTL…FIPV), 50-70 (IQLG…VSVI), 84-104 (VAVL…HGFI), 109-129 (FETP…LLFV), 144-164 (LPLN…VPGV), 185-205 (AEFS…FDLF), 214-234 (SALG…VLVV), and 247-267 (ALFG…LLAG).

The protein belongs to the UppP family.

It localises to the cell inner membrane. The catalysed reaction is di-trans,octa-cis-undecaprenyl diphosphate + H2O = di-trans,octa-cis-undecaprenyl phosphate + phosphate + H(+). Its function is as follows. Catalyzes the dephosphorylation of undecaprenyl diphosphate (UPP). Confers resistance to bacitracin. The polypeptide is Undecaprenyl-diphosphatase (Cereibacter sphaeroides (strain ATCC 17029 / ATH 2.4.9) (Rhodobacter sphaeroides)).